The primary structure comprises 510 residues: Maturase K (510 aa).

It belongs to the intron maturase 2 family. MatK subfamily.

The protein resides in the plastid. Its subcellular location is the chloroplast. Its function is as follows. Usually encoded in the trnK tRNA gene intron. Probably assists in splicing its own and other chloroplast group II introns. The protein is Maturase K of Anomochloa marantoidea (Herbaceous bamboo).